A 122-amino-acid polypeptide reads, in one-letter code: MIQMQTNLDVADNSGARRVMCIKVLGGSKRKYAGVGDVIVVSVKEAIPRGRVKKGDVMKAVVVRTAKDVKRADGSVIRFDKNAAVLINNQKEPIGTRIFGPVPRELRARNHMKIISLAPEVL.

The protein belongs to the universal ribosomal protein uL14 family. Part of the 50S ribosomal subunit. Forms a cluster with proteins L3 and L19. In the 70S ribosome, L14 and L19 interact and together make contacts with the 16S rRNA in bridges B5 and B8.

Binds to 23S rRNA. Forms part of two intersubunit bridges in the 70S ribosome. The sequence is that of Large ribosomal subunit protein uL14 from Methylobacterium radiotolerans (strain ATCC 27329 / DSM 1819 / JCM 2831 / NBRC 15690 / NCIMB 10815 / 0-1).